The following is a 445-amino-acid chain: tRNA(Ile)-lysidine synthase (445 aa).

Serine 30 to serine 35 serves as a coordination point for ATP.

This sequence belongs to the tRNA(Ile)-lysidine synthase family.

It is found in the cytoplasm. It catalyses the reaction cytidine(34) in tRNA(Ile2) + L-lysine + ATP = lysidine(34) in tRNA(Ile2) + AMP + diphosphate + H(+). In terms of biological role, ligates lysine onto the cytidine present at position 34 of the AUA codon-specific tRNA(Ile) that contains the anticodon CAU, in an ATP-dependent manner. Cytidine is converted to lysidine, thus changing the amino acid specificity of the tRNA from methionine to isoleucine. The chain is tRNA(Ile)-lysidine synthase from Alkalilimnicola ehrlichii (strain ATCC BAA-1101 / DSM 17681 / MLHE-1).